Here is a 330-residue protein sequence, read N- to C-terminus: Calponin-3 (330 aa).

The residue at position 23 (K23) is an N6-acetyllysine. The 105-residue stretch at 26 to 130 folds into the Calponin-homology (CH) domain; it reads QQAEEDLRNW…TLVALAGLAK (105 aa). K158 is modified (N6-methyllysine). Calponin-like repeat units follow at residues 164-189, 204-229, and 243-268; these read IGLQMGTNKCASQAGMTAYGTRRHLY, ISLQMGTNKGASQAGMLAPGTRRDIY, and ISLQMGTNKVASQKGMSVYGLGRQVY. The interval 279–330 is disordered; that stretch reads PVIHNGSQGTGTNGSEISDSDYQAEYPDEYHGEYPDDYPREYQYGDDQGIDY. The segment covering 306–318 has biased composition (basic and acidic residues); it reads DEYHGEYPDDYPR.

The protein belongs to the calponin family.

Functionally, thin filament-associated protein that is implicated in the regulation and modulation of smooth muscle contraction. It is capable of binding to actin, calmodulin and tropomyosin. The interaction of calponin with actin inhibits the actomyosin Mg-ATPase activity. This chain is Calponin-3 (Cnn3), found in Mus musculus (Mouse).